Consider the following 788-residue polypeptide: Putative wall-associated receptor kinase-like 11 (788 aa).

A signal peptide spans 1–27 (MRCDNNYSFSILFSLLLILILDSKVVS). The Extracellular segment spans residues 28-375 (LSTSCQSKSV…TFNCIGNKTR (348 aa)). N-linked (GlcNAc...) asparagine glycosylation is found at asparagine 65, asparagine 80, asparagine 121, asparagine 159, asparagine 233, asparagine 253, asparagine 278, asparagine 295, and asparagine 310. An atypical EGF-like region spans residues 306 to 369 (CICNNVTISG…CVNLPGTFNC (64 aa)). Intrachain disulfides connect cysteine 308–cysteine 321, cysteine 343–cysteine 360, and cysteine 354–cysteine 369. N-linked (GlcNAc...) asparagine glycosylation is present at asparagine 372. A helical transmembrane segment spans residues 376-396 (VTMIGVGSAFGILVLVVGIWW). At 397-788 (LRKFLKKRRM…QPLFPHPTWI (392 aa)) the chain is on the cytoplasmic side. A Protein kinase domain is found at 451–726 (FSESRILGQG…KVFTDLEKIL (276 aa)). ATP is bound by residues 457–465 (LGQGGQGTV) and lysine 479. The residue at position 524 (tyrosine 524) is a Phosphotyrosine. Residue aspartate 576 is the Proton acceptor of the active site. 2 positions are modified to phosphothreonine: threonine 610 and threonine 615. Tyrosine 623 bears the Phosphotyrosine mark.

Belongs to the protein kinase superfamily. Ser/Thr protein kinase family.

Its subcellular location is the membrane. The enzyme catalyses L-seryl-[protein] + ATP = O-phospho-L-seryl-[protein] + ADP + H(+). It catalyses the reaction L-threonyl-[protein] + ATP = O-phospho-L-threonyl-[protein] + ADP + H(+). Putative serine/threonine-protein kinase that may function as a signaling receptor of extracellular matrix component. The chain is Putative wall-associated receptor kinase-like 11 (WAKL11) from Arabidopsis thaliana (Mouse-ear cress).